We begin with the raw amino-acid sequence, 2185 residues long: Genome polyprotein (2185 aa).

Gly-2 carries N-myristoyl glycine; by host lipidation. The Cytoplasmic segment spans residues 2 to 1495 (GAQVSTQKTG…HVSRAFICLQ (1494 aa)). Residues 568-584 (FFQGPVEDAITAAIGRV) form an amphipathic alpha-helix region. Catalysis depends on for protease 2A activity residues His-872 and Asp-890. Positions 907 and 909 each coordinate Zn(2+). Cys-961 functions as the For protease 2A activity in the catalytic mechanism. Positions 967 and 969 each coordinate Zn(2+). Residues 1101 to 1173 (NNGWLKKFTE…EQSAPSQSDQ (73 aa)) form a membrane-binding region. Residues 1101–1239 (NNGWLKKFTE…SPGAGKSVAT (139 aa)) form an oligomerization region. The RNA-binding stretch occupies residues 1122–1126 (AIKIQ). The region spanning 1205 to 1361 (EKKMSNYIQF…SMYSQNGKIN (157 aa)) is the SF3 helicase domain. Zn(2+) is bound by residues Cys-1369, Cys-1381, and Cys-1386. The segment at 1369–1386 (CDEECCPVNFKKCCPLVC) adopts a C4-type; degenerate zinc-finger fold. The segment at 1413 to 1420 (EYNHRHSV) is RNA-binding. Residues 1424–1429 (LEALFQ) form an oligomerization region. An intramembrane segment occupies 1496–1511 (AITTFVSVAGIIYIIY). At 1512-2185 (KLFAGFQGAY…TIRRKWLDSF (674 aa)) the chain is on the cytoplasmic side. Position 1521 is an O-(5'-phospho-RNA)-tyrosine (Tyr-1521). The Peptidase C3 domain occupies 1541-1719 (GPAFEFAVAM…FSAALLKHYF (179 aa)). Active-site for protease 3C activity residues include His-1580, Glu-1611, and Cys-1687. The RdRp catalytic domain maps to 1950-2066 (GHLIAFDYSG…SYPWPIDASL (117 aa)). Residues Asp-1956 and Asp-2052 each contribute to the Mg(2+) site.

This sequence belongs to the picornaviruses polyprotein family. Interacts with capsid protein VP1 and capsid protein VP3 to form heterotrimeric protomers. In terms of assembly, interacts with capsid protein VP0, and capsid protein VP3 to form heterotrimeric protomers. Five protomers subsequently associate to form pentamers which serve as building blocks for the capsid. Interacts with capsid protein VP2, capsid protein VP3 and capsid protein VP4 following cleavage of capsid protein VP0. Interacts with host CD55. Interacts with host CXADR. As to quaternary structure, interacts with capsid protein VP1 and capsid protein VP3 in the mature capsid. Interacts with capsid protein VP0 and capsid protein VP1 to form heterotrimeric protomers. Five protomers subsequently associate to form pentamers which serve as building blocks for the capsid. Interacts with capsid protein VP4 in the mature capsid. Interacts with protein 2C; this interaction may be important for virion morphogenesis. In terms of assembly, interacts with capsid protein VP1 and capsid protein VP3. As to quaternary structure, homodimer. Homohexamer; forms a hexameric ring structure with 6-fold symmetry characteristic of AAA+ ATPases. Interacts (via N-terminus) with host RTN3 (via reticulon domain); this interaction is important for viral replication. Interacts with capsid protein VP3; this interaction may be important for virion morphogenesis. In terms of assembly, interacts with protein 3CD. As to quaternary structure, homodimer. Interacts with host GBF1. Interacts (via GOLD domain) with host ACBD3 (via GOLD domain); this interaction allows the formation of a viral protein 3A/ACBD3 heterotetramer with a 2:2 stoichiometry, which will stimulate the recruitment of host PI4KB in order to synthesize PI4P at the viral RNA replication sites. Interacts with RNA-directed RNA polymerase. In terms of assembly, interacts with host TICAM1 (via C-terminus). As to quaternary structure, interacts with protein 3AB and with RNA-directed RNA polymerase. Interacts with Viral protein genome-linked and with protein 3CD. Mg(2+) serves as cofactor. Specific enzymatic cleavages in vivo by the viral proteases yield processing intermediates and the mature proteins. In terms of processing, myristoylation is required for the formation of pentamers during virus assembly. Further assembly of 12 pentamers and a molecule of genomic RNA generates the provirion. Post-translationally, during virion maturation, immature virions are rendered infectious following cleavage of VP0 into VP4 and VP2. This maturation seems to be an autocatalytic event triggered by the presence of RNA in the capsid and it is followed by a conformational change infectious virion. Myristoylation is required during RNA encapsidation and formation of the mature virus particle. In terms of processing, VPg is uridylylated by the polymerase into VPg-pUpU. This acts as a nucleotide-peptide primer for the genomic RNA replication.

It localises to the virion. The protein localises to the host cytoplasm. The protein resides in the host cytoplasmic vesicle membrane. Its subcellular location is the host nucleus. The catalysed reaction is a ribonucleoside 5'-triphosphate + H2O = a ribonucleoside 5'-diphosphate + phosphate + H(+). The enzyme catalyses Selective cleavage of Tyr-|-Gly bond in the picornavirus polyprotein.. It carries out the reaction RNA(n) + a ribonucleoside 5'-triphosphate = RNA(n+1) + diphosphate. It catalyses the reaction Selective cleavage of Gln-|-Gly bond in the poliovirus polyprotein. In other picornavirus reactions Glu may be substituted for Gln, and Ser or Thr for Gly.. Replication or transcription is subject to high level of random mutations by the nucleotide analog ribavirin. In terms of biological role, forms an icosahedral capsid of pseudo T=3 symmetry with capsid proteins VP2 and VP3. The capsid is 300 Angstroms in diameter, composed of 60 copies of each capsid protein and enclosing the viral positive strand RNA genome. Capsid protein VP1 mainly forms the vertices of the capsid. Capsid protein VP1 interacts with host cell receptors CD55 and CXADR to provide virion attachment to target host cells. This attachment induces virion internalization. Tyrosine kinases are probably involved in the entry process. After binding to its receptor, the capsid undergoes conformational changes. Capsid protein VP1 N-terminus (that contains an amphipathic alpha-helix) and capsid protein VP4 are externalized. Together, they shape a pore in the host membrane through which viral genome is translocated to host cell cytoplasm. Forms an icosahedral capsid of pseudo T=3 symmetry with capsid proteins VP2 and VP3. The capsid is 300 Angstroms in diameter, composed of 60 copies of each capsid protein and enclosing the viral positive strand RNA genome. Functionally, lies on the inner surface of the capsid shell. After binding to the host receptor, the capsid undergoes conformational changes. Capsid protein VP4 is released, Capsid protein VP1 N-terminus is externalized, and together, they shape a pore in the host membrane through which the viral genome is translocated into the host cell cytoplasm. Its function is as follows. Component of immature procapsids, which is cleaved into capsid proteins VP4 and VP2 after maturation. Allows the capsid to remain inactive before the maturation step. In terms of biological role, cysteine protease that cleaves viral polyprotein and specific host proteins. It is responsible for the autocatalytic cleavage between the P1 and P2 regions, which is the first cleavage occurring in the polyprotein. Also cleaves the host translation initiation factor EIF4G1, in order to shut down the capped cellular mRNA translation. Inhibits the host nucleus-cytoplasm protein and RNA trafficking by cleaving host members of the nuclear pores. Counteracts stress granule formation probably by antagonizing its assembly or promoting its dissassembly. Cleaves and inhibits host IFIH1/MDA5, thereby inhibiting the type-I IFN production and the establishment of the antiviral state. Cleaves and inhibits host MAVS, thereby inhibiting the type-I IFN production and the establishment of the antiviral state. Plays an essential role in the virus replication cycle by acting as a viroporin. Creates a pore in the host endoplasmic reticulum and as a consequence releases Ca2+ in the cytoplasm of infected cell. In turn, high levels of cytoplasmic calcium may trigger membrane trafficking and transport of viral ER-associated proteins to viroplasms, sites of viral genome replication. Functionally, induces and associates with structural rearrangements of intracellular membranes. Displays RNA-binding, nucleotide binding and NTPase activities. May play a role in virion morphogenesis and viral RNA encapsidation by interacting with the capsid protein VP3. Its function is as follows. Localizes the viral replication complex to the surface of membranous vesicles. Together with protein 3CD binds the Cis-Active RNA Element (CRE) which is involved in RNA synthesis initiation. Acts as a cofactor to stimulate the activity of 3D polymerase, maybe through a nucleid acid chaperone activity. In terms of biological role, localizes the viral replication complex to the surface of membranous vesicles. It inhibits host cell endoplasmic reticulum-to-Golgi apparatus transport and causes the disassembly of the Golgi complex, possibly through GBF1 interaction. This would result in depletion of MHC, trail receptors and IFN receptors at the host cell surface. Plays an essential role in viral RNA replication by recruiting ACBD3 and PI4KB at the viral replication sites, thereby allowing the formation of the rearranged membranous structures where viral replication takes place. Acts as a primer for viral RNA replication and remains covalently bound to viral genomic RNA. VPg is uridylylated prior to priming replication into VPg-pUpU. The oriI viral genomic sequence may act as a template for this. The VPg-pUpU is then used as primer on the genomic RNA poly(A) by the RNA-dependent RNA polymerase to replicate the viral genome. During genome replication, the VPg-RNA linkage is removed by the host TDP2, thereby accelerating replication. During the late stage of the replication cycle, host TDP2 is excluded from sites of viral RNA synthesis and encapsidation, allowing for the generation of progeny virions. Functionally, involved in the viral replication complex and viral polypeptide maturation. It exhibits protease activity with a specificity and catalytic efficiency that is different from protease 3C. Protein 3CD lacks polymerase activity. Protein 3CD binds to the 5'UTR of the viral genome. Its function is as follows. Major viral protease that mediates proteolytic processing of the polyprotein. Cleaves host EIF5B, contributing to host translation shutoff. Also cleaves host PABPC1, contributing to host translation shutoff. Cleaves and inhibits host RIGI, thereby inhibiting the type-I IFN production and the establishment of the antiviral state. Cleaves and inhibits host MAVS, thereby inhibiting the type-I IFN production and the establishment of the antiviral state. Cleaves and inhibits host TICAM1/TRIF, thereby inhibiting the type-I IFN production. Cleaves host NLRP1, triggers host N-glycine-mediated degradation of the autoinhibitory NLRP1 N-terminal fragment. In terms of biological role, replicates the viral genomic RNA on the surface of intracellular membranes. May form linear arrays of subunits that propagate along a strong head-to-tail interaction called interface-I. Covalently attaches UMP to a tyrosine of VPg, which is used to prime RNA synthesis. The positive stranded RNA genome is first replicated at virus induced membranous vesicles, creating a dsRNA genomic replication form. This dsRNA is then used as template to synthesize positive stranded RNA genomes. ss(+)RNA genomes are either translated, replicated or encapsidated. This is Genome polyprotein from Homo sapiens (Human).